Consider the following 256-residue polypeptide: Minor capsid protein P7 (256 aa).

2 hydrophobic regions span residues 24–44 (LLFASTWLYINNYILLSIIMK) and 47–67 (TKHMILLGFVAVVVVFIIFML). Intrachain disulfides connect Cys-120-Cys-134, Cys-156-Cys-172, and Cys-188-Cys-211.

In terms of assembly, interacts with the major capsid protein. In terms of processing, stabilized by 3 intramolecular disulfide bonds.

The protein localises to the virion. One of the minor capsid proteins that constitute a network internal to the major capsid proteins and outside the lipid membrane. The minor capsid proteins glue and stabilize the capsomers. The chain is Minor capsid protein P7 from Paramecium bursaria Chlorella virus 1 (PBCV-1).